The primary structure comprises 88 residues: Small ribosomal subunit protein uS17 (88 aa).

Belongs to the universal ribosomal protein uS17 family. Part of the 30S ribosomal subunit.

Its function is as follows. One of the primary rRNA binding proteins, it binds specifically to the 5'-end of 16S ribosomal RNA. The chain is Small ribosomal subunit protein uS17 from Lactobacillus gasseri (strain ATCC 33323 / DSM 20243 / BCRC 14619 / CIP 102991 / JCM 1131 / KCTC 3163 / NCIMB 11718 / NCTC 13722 / AM63).